The primary structure comprises 1481 residues: Cystic fibrosis transmembrane conductance regulator (1481 aa).

Residues Met1 to Phe77 are Cytoplasmic-facing. A helical membrane pass occupies residues Leu78–Gln98. The 285-residue stretch at Phe81 to Leu365 folds into the ABC transmembrane type-1 1 domain. Topologically, residues Pro99–Tyr122 are extracellular. A helical transmembrane segment spans residues Leu123–Gln146. Residues His147–Leu195 lie on the Cytoplasmic side of the membrane. The chain crosses the membrane as a helical span at residues Ala196–Trp216. The Extracellular portion of the chain corresponds to Asp217–Ser222. A helical membrane pass occupies residues Ala223–Met243. Over Met244 to Lys298 the chain is Cytoplasmic. The chain crosses the membrane as a helical span at residues Ala299 to Phe319. Topologically, residues Leu320–Thr339 are extracellular. Residues Ile340 to Val358 traverse the membrane as a helical segment. The Cytoplasmic segment spans residues Gln359–Ser859. ATP contacts are provided by residues Trp401, Ser435, Gly459–Thr466, and Gln494. One can recognise an ABC transporter 1 domain in the interval Asn424–Gly647. The S-palmitoyl cysteine moiety is linked to residue Cys525. A Phosphoserine modification is found at Ser550. The interval Ser655 to Glu832 is disordered R region. 2 positions are modified to phosphoserine; by PKA: Ser661 and Ser671. Residue Ser687 is modified to Phosphoserine; by PKC. A Glycyl lysine isopeptide (Lys-Gly) (interchain with G-Cter in ubiquitin) cross-link involves residue Lys689. Residues Ser701 and Ser713 each carry the phosphoserine; by PKA modification. Thr718 carries the phosphothreonine modification. Residues Ser738, Ser769, Ser796, and Ser814 each carry the phosphoserine; by PKA modification. The chain crosses the membrane as a helical span at residues Leu860–Val880. The 297-residue stretch at Leu860–Ser1156 folds into the ABC transmembrane type-1 2 domain. At Val881 to Ile919 the chain is on the extracellular side. Residues Asn895 and Asn901 are each glycosylated (N-linked (GlcNAc...) asparagine). A discontinuously helical transmembrane segment spans residues Tyr920–His940. Topologically, residues Thr941 to Thr991 are cytoplasmic. The helical transmembrane segment at Ile992 to Leu1012 threads the bilayer. The Extracellular segment spans residues Gln1013 to Pro1014. Residues Tyr1015–Leu1035 form a helical membrane-spanning segment. Over His1036 to Thr1096 the chain is Cytoplasmic. The chain crosses the membrane as a helical span at residues Leu1097 to Phe1117. The Extracellular portion of the chain corresponds to Ile1118–Gly1131. The helical transmembrane segment at Ile1132–Ile1152 threads the bilayer. At Asp1153–Leu1481 the chain is on the cytoplasmic side. The ABC transporter 2 domain occupies Met1211–Ser1444. Residues Tyr1220 and Gly1245–Ser1252 contribute to the ATP site. An interaction with GORASP2 region spans residues Arg1387–Leu1481. A lipid anchor (S-palmitoyl cysteine) is attached at Cys1396. 2 positions are modified to phosphoserine: Ser1445 and Ser1457. Residues His1453 to Arg1462 are compositionally biased toward basic residues. A disordered region spans residues His1453–Leu1481. The span at Glu1471 to Leu1481 shows a compositional bias: acidic residues. A PDZ-binding motif is present at residues Thr1479 to Leu1481.

This sequence belongs to the ABC transporter superfamily. ABCC family. CFTR transporter (TC 3.A.1.202) subfamily. In terms of assembly, monomer; does not require oligomerization for channel activity. May form oligomers in the membrane. Interacts with SLC26A3, SLC26A6 and NHERF1. Interacts with SHANK2. Interacts with MYO6. Interacts (via C-terminus) with GOPC (via PDZ domain); this promotes CFTR internalization and thereby decreases channel activity. Interacts with SLC4A7 through NHERF1. Found in a complex with MYO5B and RAB11A. Interacts with ANO1. Interacts with SLC26A8. Interacts with AHCYL1; the interaction increases CFTR activity. Interacts with CSE1L. The core-glycosylated form interacts with GORASP2 (via PDZ GRASP-type 1 domain) in respone to ER stress. Interacts with MARCHF2; the interaction leads to CFTR ubiqtuitination and degradation. Interacts with ADGRG2. N-glycosylated. Post-translationally, phosphorylated; cAMP treatment promotes phosphorylation and activates the channel. Dephosphorylation decreases the ATPase activity (in vitro). Phosphorylation at PKA sites activates the channel. Phosphorylation at PKC sites enhances the response to phosphorylation by PKA. Phosphorylated by AMPK; this inhibits channel activity. In terms of processing, ubiquitinated, leading to its degradation in the lysosome. Deubiquitination by USP10 in early endosomes enhances its endocytic recycling to the cell membrane. Ubiquitinated by RNF185 during ER stress. Ubiquitinated by MARCHF2.

It localises to the apical cell membrane. The protein resides in the early endosome membrane. The protein localises to the cell membrane. It is found in the recycling endosome membrane. Its subcellular location is the endoplasmic reticulum membrane. It localises to the nucleus. The enzyme catalyses ATP + H2O + closed Cl(-) channel = ADP + phosphate + open Cl(-) channel.. It catalyses the reaction chloride(in) = chloride(out). The catalysed reaction is hydrogencarbonate(in) = hydrogencarbonate(out). It carries out the reaction ATP + H2O = ADP + phosphate + H(+). Functionally, epithelial ion channel that plays an important role in the regulation of epithelial ion and water transport and fluid homeostasis. Mediates the transport of chloride ions across the cell membrane. Possesses an intrinsic ATPase activity and utilizes ATP to gate its channel; the passive flow of anions through the channel is gated by cycles of ATP binding and hydrolysis by the ATP-binding domains. The ion channel is also permeable to HCO(3)(-); selectivity depends on the extracellular chloride concentration. Exerts its function also by modulating the activity of other ion channels and transporters. Contributes to the regulation of the pH and the ion content of the epithelial fluid layer. Modulates the activity of the epithelial sodium channel (ENaC) complex, in part by regulating the cell surface expression of the ENaC complex. May regulate bicarbonate secretion and salvage in epithelial cells by regulating the transporter SLC4A7. Can inhibit the chloride channel activity of ANO1. Plays a role in the chloride and bicarbonate homeostasis during sperm epididymal maturation and capacitation. This chain is Cystic fibrosis transmembrane conductance regulator, found in Cavia porcellus (Guinea pig).